We begin with the raw amino-acid sequence, 196 residues long: UPF0301 protein BF2109 (196 aa).

The protein belongs to the UPF0301 (AlgH) family.

In Bacteroides fragilis (strain ATCC 25285 / DSM 2151 / CCUG 4856 / JCM 11019 / LMG 10263 / NCTC 9343 / Onslow / VPI 2553 / EN-2), this protein is UPF0301 protein BF2109.